Reading from the N-terminus, the 107-residue chain is Phosphoribosyl-ATP pyrophosphatase (107 aa).

It belongs to the PRA-PH family.

It localises to the cytoplasm. It carries out the reaction 1-(5-phospho-beta-D-ribosyl)-ATP + H2O = 1-(5-phospho-beta-D-ribosyl)-5'-AMP + diphosphate + H(+). It functions in the pathway amino-acid biosynthesis; L-histidine biosynthesis; L-histidine from 5-phospho-alpha-D-ribose 1-diphosphate: step 2/9. The polypeptide is Phosphoribosyl-ATP pyrophosphatase (hisE) (Mesorhizobium japonicum (strain LMG 29417 / CECT 9101 / MAFF 303099) (Mesorhizobium loti (strain MAFF 303099))).